A 414-amino-acid polypeptide reads, in one-letter code: Serine hydroxymethyltransferase (414 aa).

(6S)-5,6,7,8-tetrahydrofolate is bound by residues leucine 121 and glycine 125–leucine 127. N6-(pyridoxal phosphate)lysine is present on lysine 229.

It belongs to the SHMT family. Homodimer. It depends on pyridoxal 5'-phosphate as a cofactor.

The protein localises to the cytoplasm. It carries out the reaction (6R)-5,10-methylene-5,6,7,8-tetrahydrofolate + glycine + H2O = (6S)-5,6,7,8-tetrahydrofolate + L-serine. The protein operates within one-carbon metabolism; tetrahydrofolate interconversion. It participates in amino-acid biosynthesis; glycine biosynthesis; glycine from L-serine: step 1/1. In terms of biological role, catalyzes the reversible interconversion of serine and glycine with tetrahydrofolate (THF) serving as the one-carbon carrier. This reaction serves as the major source of one-carbon groups required for the biosynthesis of purines, thymidylate, methionine, and other important biomolecules. Also exhibits THF-independent aldolase activity toward beta-hydroxyamino acids, producing glycine and aldehydes, via a retro-aldol mechanism. The sequence is that of Serine hydroxymethyltransferase from Polaromonas sp. (strain JS666 / ATCC BAA-500).